A 248-amino-acid chain; its full sequence is Flavodoxin/ferredoxin--NADP reductase (248 aa).

The 100-residue stretch at 2–101 (ADWVTGKVTK…SEAAGFFVLD (100 aa)) folds into the FAD-binding FR-type domain. Residues 50–53 (RAYS), Tyr-66, 74–76 (KLS), and Thr-116 each bind FAD. NADP(+) is bound by residues 143–144 (AR), 173–174 (SR), Arg-184, 214–216 (NPQ), and Asp-220. Residue 247–248 (YW) participates in FAD binding.

It belongs to the ferredoxin--NADP reductase type 1 family. Requires FAD as cofactor.

Its subcellular location is the cytoplasm. It catalyses the reaction 2 reduced [2Fe-2S]-[ferredoxin] + NADP(+) + H(+) = 2 oxidized [2Fe-2S]-[ferredoxin] + NADPH. The enzyme catalyses reduced [flavodoxin] + NADP(+) = oxidized [flavodoxin] + NADPH + 2 H(+). Transports electrons between flavodoxin or ferredoxin and NADPH. In Shigella flexneri, this protein is Flavodoxin/ferredoxin--NADP reductase (fpr).